The primary structure comprises 201 residues: 3-isopropylmalate dehydratase small subunit (201 aa).

The protein belongs to the LeuD family. LeuD type 1 subfamily. As to quaternary structure, heterodimer of LeuC and LeuD.

The catalysed reaction is (2R,3S)-3-isopropylmalate = (2S)-2-isopropylmalate. The protein operates within amino-acid biosynthesis; L-leucine biosynthesis; L-leucine from 3-methyl-2-oxobutanoate: step 2/4. In terms of biological role, catalyzes the isomerization between 2-isopropylmalate and 3-isopropylmalate, via the formation of 2-isopropylmaleate. In Shewanella amazonensis (strain ATCC BAA-1098 / SB2B), this protein is 3-isopropylmalate dehydratase small subunit.